The primary structure comprises 305 residues: MNFQEIILALNQFWGEQGCIIQQPYDVEKGAGTMNPATFLRALGPEPWNVAYVEPSRRPTDGRYGENPNRLQHYYQYQVILKPSPDDVLEMYLDSLRRLGIDPLKHDIRFVEDNWESPTLGAWGLGWEVWLDGMEVTQFTYFQQCGGIDCRPVCAEITYGIERIAMFIQQKDSVYDIEWVEGITYGDVHHQGEVDYSHYNFEVADTAALFTFFDMYEKEALRVIEKGLVQPAYDYVLKCSHTFNLLDARGAISVTERTSFITRVRHLARVCAQAYVKQRERLRYPLIKDPAQRQRLGLDRENTGE.

It belongs to the class-II aminoacyl-tRNA synthetase family. In terms of assembly, tetramer of two alpha and two beta subunits.

It is found in the cytoplasm. It catalyses the reaction tRNA(Gly) + glycine + ATP = glycyl-tRNA(Gly) + AMP + diphosphate. This Heliobacterium modesticaldum (strain ATCC 51547 / Ice1) protein is Glycine--tRNA ligase alpha subunit.